The chain runs to 600 residues: Repressor of filamentous growth 1 (600 aa).

The segment covering 1–14 has biased composition (polar residues); sequence MSTAIYYSTHNNMH. Disordered stretches follow at residues 1 to 59, 112 to 160, 180 to 200, 266 to 337, 427 to 549, and 564 to 600; these read MSTA…NSAN, NGGY…TDIS, GIDG…NNNN, AEEE…SRDN, STTS…GYDN, and QQGL…QPPQ. Low complexity-rich tracts occupy residues 20–39 and 47–59; these read TNGS…SNPN and INNN…NSAN. Residues 131 to 160 show a composition bias toward polar residues; sequence FDTSYSNQTTPTSAYTNFNNDSTHSPTDIS. Residues 188-200 are compositionally biased toward low complexity; sequence NNNNNNNNNNNNN. A DNA-binding region (HMG box) is located at residues 212 to 281; that stretch reads IPRPRNAFIL…NHAKKYPGYR (70 aa). Positions 272–289 are enriched in basic residues; that stretch reads NHAKKYPGYRYTPRRNGR. Over residues 297-312 the composition is skewed to low complexity; that stretch reads KNKPLPNNKSNSISGM. Over residues 313–322 the composition is skewed to gly residues; it reads SGSGGGGGSI. Residues 427–470 show a composition bias toward low complexity; that stretch reads STTSTTAPTTTTTTTTNASSIGLSVPPTATTTSTSSQPTSANSQ. Polar residues predominate over residues 481–496; it reads PVSSTHHQSSISEIAA. The span at 497–506 shows a compositional bias: low complexity; the sequence is QQQQQQQQQQ. Residues 507–547 show a composition bias toward polar residues; that stretch reads FMYNTNYSTIPPNNTTTMQQHSAGTGNDYSLNGNNSGNTGY. Composition is skewed to low complexity over residues 564–574 and 581–600; these read QQGLQVQQQGQ and HAAQ…QPPQ.

Its subcellular location is the nucleus. Functionally, transcription regulator that functions in both the positive and negative regulation of filamentous growth, depending upon the environmental conditions. Recruits the TUP1/SSN6 general repression complex to achieve repression. Regulates genes encoding cell wall components that are specifically expressed in the filamentous forms such as HWP1, RBT1, HYR1, ECE1, ALS1, RBT4 and RBT5. The protein is Repressor of filamentous growth 1 (RFG1) of Candida albicans (strain SC5314 / ATCC MYA-2876) (Yeast).